Here is a 54-residue protein sequence, read N- to C-terminus: Ovomucoid (54 aa).

Positions 4–54 (VDCSDYPKPVCTLDYMPLCGSDNKTYSNKCNFCNAVVDSNGTITLSHFGRC) constitute a Kazal-like domain. Intrachain disulfides connect cysteine 6/cysteine 36, cysteine 14/cysteine 33, and cysteine 22/cysteine 54. A glycan (N-linked (GlcNAc...) asparagine) is linked at asparagine 43.

The protein localises to the secreted. This is Ovomucoid from Coloeus monedula (Eurasian jackdaw).